We begin with the raw amino-acid sequence, 269 residues long: Probable cysteine protease avirulence protein AvrPpiC2 (269 aa).

Positions 1 to 39 are disordered; it reads MTIVSGHIGKHPSLTTVQAGSSASVENQMPDPAQFSDGR. Positions 13 to 27 are enriched in polar residues; that stretch reads SLTTVQAGSSASVEN. Catalysis depends on residues C72, H213, and D230.

The protein belongs to the peptidase C58 family.

Functionally, potential cysteine protease. Avirulence protein, which may be essential during infection of plant cells from Pea and some Arabidopsis thaliana cultivars. May act by affecting the plant defense system. In plants lacking appropriate resistance (R) gene, it probably impairs the plant defense system and leads to the bacteria multiplication. In contrast, in plants containing the appropriate R protein, it is unable to induce disease symptoms, explaining its avirulence name. The chain is Probable cysteine protease avirulence protein AvrPpiC2 (avrPpiC2) from Pseudomonas syringae pv. pisi.